Here is a 128-residue protein sequence, read N- to C-terminus: Putative pre-16S rRNA nuclease (128 aa).

This sequence belongs to the YqgF nuclease family.

The protein localises to the cytoplasm. In terms of biological role, could be a nuclease involved in processing of the 5'-end of pre-16S rRNA. The chain is Putative pre-16S rRNA nuclease from Campylobacter lari (strain RM2100 / D67 / ATCC BAA-1060).